Consider the following 324-residue polypeptide: Aspartate carbamoyltransferase catalytic subunit (324 aa).

Arg-71 and Thr-72 together coordinate carbamoyl phosphate. An L-aspartate-binding site is contributed by Lys-99. Carbamoyl phosphate is bound by residues Arg-121, His-151, and Gln-154. Residues Arg-184 and Arg-239 each contribute to the L-aspartate site. Residues Gly-280 and Pro-281 each contribute to the carbamoyl phosphate site.

This sequence belongs to the aspartate/ornithine carbamoyltransferase superfamily. ATCase family. In terms of assembly, heterododecamer (2C3:3R2) of six catalytic PyrB chains organized as two trimers (C3), and six regulatory PyrI chains organized as three dimers (R2).

It carries out the reaction carbamoyl phosphate + L-aspartate = N-carbamoyl-L-aspartate + phosphate + H(+). It participates in pyrimidine metabolism; UMP biosynthesis via de novo pathway; (S)-dihydroorotate from bicarbonate: step 2/3. In terms of biological role, catalyzes the condensation of carbamoyl phosphate and aspartate to form carbamoyl aspartate and inorganic phosphate, the committed step in the de novo pyrimidine nucleotide biosynthesis pathway. The polypeptide is Aspartate carbamoyltransferase catalytic subunit (Cupriavidus necator (strain ATCC 17699 / DSM 428 / KCTC 22496 / NCIMB 10442 / H16 / Stanier 337) (Ralstonia eutropha)).